Consider the following 66-residue polypeptide: Putative antitoxin APE_0279a.1 (66 aa).

The protein belongs to the UPF0165 family.

Its function is as follows. Possibly the antitoxin component of a type II toxin-antitoxin (TA) system. The sequence is that of Putative antitoxin APE_0279a.1 from Aeropyrum pernix (strain ATCC 700893 / DSM 11879 / JCM 9820 / NBRC 100138 / K1).